We begin with the raw amino-acid sequence, 121 residues long: Non-specific lipid-transfer protein 3 (121 aa).

The N-terminal stretch at 1–28 is a signal peptide; sequence MAGARRTMALVALVAVVAAAVVAERASA. Intrachain disulfides connect cysteine 32/cysteine 80, cysteine 42/cysteine 57, cysteine 58/cysteine 103, and cysteine 78/cysteine 117.

The protein belongs to the plant LTP family.

Plant non-specific lipid-transfer proteins transfer phospholipids as well as galactolipids across membranes. May play a role in wax or cutin deposition in the cell walls of expanding epidermal cells and certain secretory tissues. May possess an antifungal activity and protect the plant against pathogens. The sequence is that of Non-specific lipid-transfer protein 3 (LTP110-A) from Oryza sativa subsp. indica (Rice).